A 265-amino-acid chain; its full sequence is Putative N(omega)-hydroxy-L-arginine synthase DcsA (265 aa).

Belongs to the DcsA family. The cofactor is heme.

Functionally, involved in the biosynthesis of the antibiotic D-cycloserine (DCS), a cyclic structural analog of D-alanine, used as an antitubercular agent. Could catalyze the production of N(omega)-hydroxy-L-arginine (NHA) from L-arginine. The sequence is that of Putative N(omega)-hydroxy-L-arginine synthase DcsA from Streptomyces lavendulae.